A 688-amino-acid polypeptide reads, in one-letter code: PTS system glucoside-specific EIICBA component (688 aa).

The PTS EIIC type-1 domain occupies 3–427 (KKLFGQLQRI…FKLKTPGRED (425 aa)). Helical transmembrane passes span 12–32 (IGKA…LLAF), 81–101 (LGLA…YLIM), 137–157 (LVLG…MGAL), 182–202 (FVPI…SFAW), 223–243 (LTTF…LHHI), 284–304 (AFTT…AFAI), 315–335 (VVGG…ITEP), 340–360 (FLFV…TSFL), 364–384 (LLGV…ILYG), and 395–415 (LVIP…DFAI). The region spanning 438–519 (AKLPFDVLDA…AKIMSGEITK (82 aa)) is the PTS EIIB type-1 domain. The active-site Phosphocysteine intermediate; for EIIB activity is Cys-460. The region spanning 560 to 664 (DQVFAGKMMG…SIVTPMIITN (105 aa)) is the PTS EIIA type-1 domain. The active-site Tele-phosphohistidine intermediate; for EIIA activity is His-612.

It is found in the cell membrane. Functionally, the phosphoenolpyruvate-dependent sugar phosphotransferase system (sugar PTS), a major carbohydrate active -transport system, catalyzes the phosphorylation of incoming sugar substrates concomitantly with their translocation across the cell membrane. This system is involved in alpha- and beta-glucoside transport. The polypeptide is PTS system glucoside-specific EIICBA component (glcB) (Staphylococcus aureus (strain bovine RF122 / ET3-1)).